The primary structure comprises 558 residues: Kelch-like protein 23 (558 aa).

A BTB domain is found at 36–104 (TDITLQCPSG…AYTSQIEITE (69 aa)). The 102-residue stretch at 139–240 (CIGMHSFAEF…DPVYLKTALG (102 aa)) folds into the BACK domain. Kelch repeat units follow at residues 274–320 (TMYI…CLGP), 321–369 (NIYV…TLGG), 370–416 (CVYA…VLHD), 418–466 (IYVI…PLEN), 467–508 (KLYL…IMNG), and 510–557 (IYVT…CVYN).

In Pongo abelii (Sumatran orangutan), this protein is Kelch-like protein 23 (KLHL23).